A 429-amino-acid chain; its full sequence is RNA-binding protein BRN2 (429 aa).

RRM domains are found at residues 12 to 93 (VKLF…YADG), 100 to 180 (HKLF…WADT), and 330 to 408 (ANLF…LKRD). A disordered region spans residues 410 to 429 (GQQQQQQQSKNPLFNGLLNS). Residues 418–429 (SKNPLFNGLLNS) show a composition bias toward polar residues.

Expressed in roots, stems, flowers and siliques.

It localises to the cytoplasm. Functionally, RNA-binding protein involved in the regulation of flowering time. Acts as a repressor of the activity of SOC1, a transcriptional activator of flowering time. Binds to the 3'-UTR of SOC1 mRNA in the cytoplasm and participates in SOC1 mRNA decay, mediated by the distal region of the SOC1 3'-UTR. The sequence is that of RNA-binding protein BRN2 from Arabidopsis thaliana (Mouse-ear cress).